The following is a 480-amino-acid chain: UDP-N-acetylmuramate--L-alanine ligase (480 aa).

126–132 (GTHGKTT) is an ATP binding site.

Belongs to the MurCDEF family.

The protein resides in the cytoplasm. It carries out the reaction UDP-N-acetyl-alpha-D-muramate + L-alanine + ATP = UDP-N-acetyl-alpha-D-muramoyl-L-alanine + ADP + phosphate + H(+). The protein operates within cell wall biogenesis; peptidoglycan biosynthesis. Functionally, cell wall formation. In Blochmanniella pennsylvanica (strain BPEN), this protein is UDP-N-acetylmuramate--L-alanine ligase.